Consider the following 352-residue polypeptide: Transcription factor MYB86 (352 aa).

HTH myb-type domains follow at residues 9 to 61 and 62 to 116; these read KQKL…INYL and RPDL…KKKL. 2 consecutive DNA-binding regions (H-T-H motif) follow at residues 37-61 and 89-112; these read WSSV…INYL and WSQI…NSCL.

In terms of tissue distribution, expressed in stems, flowers and seeds. Weakly expressed in leaves and roots.

It is found in the nucleus. Functionally, probable transcription factor. The polypeptide is Transcription factor MYB86 (MYB86) (Arabidopsis thaliana (Mouse-ear cress)).